Here is a 1415-residue protein sequence, read N- to C-terminus: DNA-directed RNA polymerase subunit beta' (1415 aa).

Zn(2+) contacts are provided by Cys72, Cys74, Cys87, and Cys90. Mg(2+) is bound by residues Asp463, Asp465, and Asp467. Zn(2+) contacts are provided by Cys811, Cys885, Cys892, and Cys895.

The protein belongs to the RNA polymerase beta' chain family. As to quaternary structure, the RNAP catalytic core consists of 2 alpha, 1 beta, 1 beta' and 1 omega subunit. When a sigma factor is associated with the core the holoenzyme is formed, which can initiate transcription. It depends on Mg(2+) as a cofactor. Requires Zn(2+) as cofactor.

It carries out the reaction RNA(n) + a ribonucleoside 5'-triphosphate = RNA(n+1) + diphosphate. Functionally, DNA-dependent RNA polymerase catalyzes the transcription of DNA into RNA using the four ribonucleoside triphosphates as substrates. The chain is DNA-directed RNA polymerase subunit beta' from Cereibacter sphaeroides (strain ATCC 17023 / DSM 158 / JCM 6121 / CCUG 31486 / LMG 2827 / NBRC 12203 / NCIMB 8253 / ATH 2.4.1.) (Rhodobacter sphaeroides).